A 229-amino-acid chain; its full sequence is Putative vacuolar protein sorting-associated protein 60 (229 aa).

Positions 16–78 (YDTLEKSVKG…IQKKKVYENN (63 aa)) form a coiled coil.

The protein belongs to the SNF7 family.

The polypeptide is Putative vacuolar protein sorting-associated protein 60 (VPS60) (Plasmodium falciparum (isolate 3D7)).